The sequence spans 392 residues: Probable Ni/Fe-hydrogenase 2 b-type cytochrome subunit (392 aa).

Topologically, residues 1–11 are periplasmic; it reads MSHDPQPLGGK. Residues 12–32 traverse the membrane as a helical segment; that stretch reads IISKPVMIFGPLIVICMLLIV. The Cytoplasmic segment spans residues 33–34; sequence KR. Residues 35–55 form a helical membrane-spanning segment; that stretch reads LVFGLGSVSDLNGGFPWGVWI. Over 56–58 the chain is Periplasmic; it reads AFD. The helical transmembrane segment at 59-79 threads the bilayer; the sequence is LLIGTGFACGGWALAWAVYVF. Residues 80–90 are Cytoplasmic-facing; it reads NRGQYHPLVRP. A helical transmembrane segment spans residues 91 to 111; sequence ALLASLFGYSLGGLSITIDVG. Topologically, residues 112 to 133 are periplasmic; the sequence is RYWNLPYFYIPGHFNVNSVLFE. A helical membrane pass occupies residues 134-154; sequence TAVCMTIYIGVMALEFAPALF. Residues 155–168 are Cytoplasmic-facing; the sequence is ERLGWKVSLQRLNK. A helical transmembrane segment spans residues 169–189; that stretch reads VMFFIIALGALLPTMHQSSMG. At 190–207 the chain is on the periplasmic side; sequence SLMISAGYKVHPLWQSYE. The helical transmembrane segment at 208–228 threads the bilayer; that stretch reads MLPLFSLLTAFIMGFSIVIFE. Residues 229-249 are Cytoplasmic-facing; sequence GSLVQAGLRGNGPDEKSLFVK. Residues 250 to 270 form a helical membrane-spanning segment; it reads LTNTISVLLAIFIVLRFGELI. Topologically, residues 271 to 281 are periplasmic; sequence YRDKLSLAFAG. Residues 282-302 form a helical membrane-spanning segment; the sequence is DFYSVMFWIEVLLMLFPLVVL. Residues 303 to 333 lie on the Cytoplasmic side of the membrane; that stretch reads RVAKLRNDSRMLFLSALSALLGCATWRLTYS. Residues 334–354 traverse the membrane as a helical segment; sequence LVAFNPGGGYAYFPTWEELLI. Ser355 is a topological domain (periplasmic). A helical transmembrane segment spans residues 356-376; sequence IGFVAIEICAYIVLIRLLPIL. Topologically, residues 377 to 392 are cytoplasmic; it reads PPLKQNDHNRHEASKA.

Belongs to the NrfD family.

The protein resides in the cell inner membrane. Its function is as follows. Probable b-type cytochrome. The protein is Probable Ni/Fe-hydrogenase 2 b-type cytochrome subunit (hybB) of Escherichia coli (strain K12).